Here is a 301-residue protein sequence, read N- to C-terminus: MIILEQNNRIIVELLEQKFANAKEGGKPESVNVTFADFDGVLYKLSNPDGDRTKIILSISLKFYTELQQHGADDLLRRVYGGHMRSTPEQGFNVTLEYNLADLPADTTDLVQAASALKRNCFASVFEKYFEFQEAGQEGHKRAVINYRDDETMYIEAKADRVTVIFSTVFKDADDVIIGKVFLQEFREGRKASQTAPAVLYSLGEPPLELKDLPEARVGDNVGYITFVLFPRHTNKKTKDNTIDLIHSFRDYLHYHIKCSKVYLHTRMRAKTTDFLKVLNRARPEVKGEKKTFHGRTFQTQ.

This sequence belongs to the ARPC2 family. In terms of assembly, component of the Arp2/3 complex, at least composed of arx-1, arx-2, arx-4 and arx-6.

It localises to the cytoplasm. The protein resides in the cytoskeleton. In terms of biological role, functions as actin-binding component of the Arp2/3 complex which is involved in regulation of actin polymerization and together with an activating nucleation-promoting factor (NPF) mediates the formation of branched actin networks. Seems to contact the mother actin filament. Plays a role in time-dependent memory loss and the retention of conditioned behavior over time. The chain is Probable actin-related protein 2/3 complex subunit 2 from Caenorhabditis elegans.